A 595-amino-acid chain; its full sequence is Elongation factor 4 (595 aa).

The 183-residue stretch at 2-184 folds into the tr-type G domain; that stretch reads KNIRNFSIIA…QIVERIPTPK (183 aa). GTP-binding positions include 14–19 and 131–134; these read DHGKST and NKID.

The protein belongs to the TRAFAC class translation factor GTPase superfamily. Classic translation factor GTPase family. LepA subfamily.

It localises to the cell inner membrane. The enzyme catalyses GTP + H2O = GDP + phosphate + H(+). Required for accurate and efficient protein synthesis under certain stress conditions. May act as a fidelity factor of the translation reaction, by catalyzing a one-codon backward translocation of tRNAs on improperly translocated ribosomes. Back-translocation proceeds from a post-translocation (POST) complex to a pre-translocation (PRE) complex, thus giving elongation factor G a second chance to translocate the tRNAs correctly. Binds to ribosomes in a GTP-dependent manner. This is Elongation factor 4 from Vesicomyosocius okutanii subsp. Calyptogena okutanii (strain HA).